Consider the following 334-residue polypeptide: N-acetyl-gamma-glutamyl-phosphate reductase (334 aa).

Cys154 is a catalytic residue.

Belongs to the NAGSA dehydrogenase family. Type 1 subfamily.

Its subcellular location is the cytoplasm. The enzyme catalyses N-acetyl-L-glutamate 5-semialdehyde + phosphate + NADP(+) = N-acetyl-L-glutamyl 5-phosphate + NADPH + H(+). The protein operates within amino-acid biosynthesis; L-arginine biosynthesis; N(2)-acetyl-L-ornithine from L-glutamate: step 3/4. Its function is as follows. Catalyzes the NADPH-dependent reduction of N-acetyl-5-glutamyl phosphate to yield N-acetyl-L-glutamate 5-semialdehyde. This chain is N-acetyl-gamma-glutamyl-phosphate reductase, found in Buchnera aphidicola subsp. Acyrthosiphon pisum (strain 5A).